Here is a 351-residue protein sequence, read N- to C-terminus: Glycerol-1-phosphate dehydrogenase [NAD(P)+] (351 aa).

Residues 97–101 and 119–122 contribute to the NAD(+) site; these read GKVID and TSPS. Asp124 is a substrate binding site. Residue Ser128 coordinates NAD(+). A substrate-binding site is contributed by Asp171. Asp171 and His251 together coordinate Zn(2+). Substrate is bound at residue His255. Position 267 (His267) interacts with Zn(2+).

The protein belongs to the glycerol-1-phosphate dehydrogenase family. In terms of assembly, homodimer. Zn(2+) serves as cofactor.

It localises to the cytoplasm. It carries out the reaction sn-glycerol 1-phosphate + NAD(+) = dihydroxyacetone phosphate + NADH + H(+). The catalysed reaction is sn-glycerol 1-phosphate + NADP(+) = dihydroxyacetone phosphate + NADPH + H(+). The protein operates within membrane lipid metabolism; glycerophospholipid metabolism. In terms of biological role, catalyzes the NAD(P)H-dependent reduction of dihydroxyacetonephosphate (DHAP or glycerone phosphate) to glycerol 1-phosphate (G1P). The G1P thus generated is used as the glycerophosphate backbone of phospholipids in the cellular membranes of Archaea. In Saccharolobus islandicus (strain L.S.2.15 / Lassen #1) (Sulfolobus islandicus), this protein is Glycerol-1-phosphate dehydrogenase [NAD(P)+].